Consider the following 262-residue polypeptide: Acyl-[acyl-carrier-protein]--UDP-N-acetylglucosamine O-acyltransferase (262 aa).

It belongs to the transferase hexapeptide repeat family. LpxA subfamily. Homotrimer.

It is found in the cytoplasm. It carries out the reaction a (3R)-hydroxyacyl-[ACP] + UDP-N-acetyl-alpha-D-glucosamine = a UDP-3-O-[(3R)-3-hydroxyacyl]-N-acetyl-alpha-D-glucosamine + holo-[ACP]. Its pathway is glycolipid biosynthesis; lipid IV(A) biosynthesis; lipid IV(A) from (3R)-3-hydroxytetradecanoyl-[acyl-carrier-protein] and UDP-N-acetyl-alpha-D-glucosamine: step 1/6. In terms of biological role, involved in the biosynthesis of lipid A, a phosphorylated glycolipid that anchors the lipopolysaccharide to the outer membrane of the cell. This Paraburkholderia xenovorans (strain LB400) protein is Acyl-[acyl-carrier-protein]--UDP-N-acetylglucosamine O-acyltransferase.